Consider the following 681-residue polypeptide: Transferrin (681 aa).

The N-terminal stretch at 1–18 is a signal peptide; sequence MALKLLTLIALTCAAANA. 2 consecutive Transferrin-like domains span residues 23 to 364 and 371 to 676; these read YKLC…ERGH and VRLC…DVIS. 2 disulfide bridges follow: Cys26–Cys60 and Cys35–Cys51. Asp75 and Tyr108 together coordinate Fe(3+). Cystine bridges form between Cys132/Cys228, Cys181/Cys207, Cys204/Cys213, and Cys271/Cys284. 4 residues coordinate hydrogencarbonate: Thr134, Arg138, Val140, and Gly141. Asn218 carries N-linked (GlcNAc...) asparagine glycosylation. Position 222 (Tyr222) interacts with Fe(3+). The N-linked (GlcNAc...) asparagine glycan is linked to Asn355. 2 cysteine pairs are disulfide-bonded: Cys374–Cys411 and Cys384–Cys402. Asn418 carries N-linked (GlcNAc...) asparagine glycosylation. Cystine bridges form between Cys478/Cys551, Cys506/Cys678, and Cys579/Cys596.

Belongs to the transferrin family.

The protein resides in the secreted. Functionally, transferrins are iron binding transport proteins which bind Fe(3+) ion in association with the binding of an anion, usually bicarbonate. This transferrin binds only one Fe(3+) ion per protein molecule. The protein is Transferrin of Manduca sexta (Tobacco hawkmoth).